Here is a 172-residue protein sequence, read N- to C-terminus: 3-hydroxydecanoyl-[acyl-carrier-protein] dehydratase (172 aa).

Residue His-70 is part of the active site.

The protein belongs to the thioester dehydratase family. FabA subfamily. As to quaternary structure, homodimer.

It is found in the cytoplasm. The enzyme catalyses a (3R)-hydroxyacyl-[ACP] = a (2E)-enoyl-[ACP] + H2O. It carries out the reaction (3R)-hydroxydecanoyl-[ACP] = (2E)-decenoyl-[ACP] + H2O. It catalyses the reaction (2E)-decenoyl-[ACP] = (3Z)-decenoyl-[ACP]. Its pathway is lipid metabolism; fatty acid biosynthesis. Necessary for the introduction of cis unsaturation into fatty acids. Catalyzes the dehydration of (3R)-3-hydroxydecanoyl-ACP to E-(2)-decenoyl-ACP and then its isomerization to Z-(3)-decenoyl-ACP. Can catalyze the dehydratase reaction for beta-hydroxyacyl-ACPs with saturated chain lengths up to 16:0, being most active on intermediate chain length. This is 3-hydroxydecanoyl-[acyl-carrier-protein] dehydratase from Xylella fastidiosa (strain M12).